A 334-amino-acid polypeptide reads, in one-letter code: Ferrochelatase 1 (334 aa).

The Fe cation site is built by H201 and E282.

The protein belongs to the ferrochelatase family.

The protein localises to the cytoplasm. It catalyses the reaction heme b + 2 H(+) = protoporphyrin IX + Fe(2+). The protein operates within porphyrin-containing compound metabolism; protoheme biosynthesis; protoheme from protoporphyrin-IX: step 1/1. In terms of biological role, catalyzes the ferrous insertion into protoporphyrin IX. In Shewanella oneidensis (strain ATCC 700550 / JCM 31522 / CIP 106686 / LMG 19005 / NCIMB 14063 / MR-1), this protein is Ferrochelatase 1.